A 296-amino-acid chain; its full sequence is Thymidylate synthase (296 aa).

DUMP is bound by residues Arg-23 and 157–158 (RR). The Nucleophile role is filled by Cys-177. Residues 198 to 201 (RSAD), Asn-209, and 239 to 241 (HIY) each bind dUMP. Position 201 (Asp-201) interacts with (6R)-5,10-methylene-5,6,7,8-tetrahydrofolate. Residue Ala-295 participates in (6R)-5,10-methylene-5,6,7,8-tetrahydrofolate binding.

This sequence belongs to the thymidylate synthase family. Bacterial-type ThyA subfamily. As to quaternary structure, homodimer.

It is found in the cytoplasm. The catalysed reaction is dUMP + (6R)-5,10-methylene-5,6,7,8-tetrahydrofolate = 7,8-dihydrofolate + dTMP. It participates in pyrimidine metabolism; dTTP biosynthesis. Catalyzes the reductive methylation of 2'-deoxyuridine-5'-monophosphate (dUMP) to 2'-deoxythymidine-5'-monophosphate (dTMP) while utilizing 5,10-methylenetetrahydrofolate (mTHF) as the methyl donor and reductant in the reaction, yielding dihydrofolate (DHF) as a by-product. This enzymatic reaction provides an intracellular de novo source of dTMP, an essential precursor for DNA biosynthesis. This is Thymidylate synthase from Zymomonas mobilis subsp. mobilis (strain ATCC 31821 / ZM4 / CP4).